The primary structure comprises 731 residues: Radial spoke head 10 homolog B (731 aa).

The interval 1-69 is disordered; that stretch reads MARGDNMKSS…PNENQPIGEH (69 aa). A compositionally biased stretch (polar residues) spans 7-17; it reads MKSSNKSTPEP. Composition is skewed to low complexity over residues 18 to 36 and 46 to 57; these read TLSK…SESV and SSSAVCSASTVS. MORN repeat units follow at residues 86 to 108, 109 to 131, 132 to 154, 155 to 177, 179 to 201, 204 to 226, 227 to 249, 251 to 273, 284 to 306, and 307 to 329; these read YEGE…GGHV, YKGS…DGLK, YQGD…NGST, YEGE…KTLT, YRGQ…QEAT, YKGE…SGNV, YEGQ…DLDQ, YSGQ…RKRA, YTGD…SGAL, and YCGQ…NGRV. Disordered stretches follow at residues 353–377 and 709–731; these read TTPF…SPLG and KQEQ…TSIH. The segment covering 363-377 has biased composition (low complexity); it reads SKGASQSSSNASPLG. A compositionally biased stretch (polar residues) spans 722–731; sequence VTTTSVTSIH.

It is found in the cytoplasm. The protein resides in the cytoskeleton. Its subcellular location is the cilium axoneme. The protein localises to the cell projection. It localises to the cilium. It is found in the flagellum. May function as part of axonemal radial spoke complexes. Radial spoke complexes are important for ciliary motility. The sequence is that of Radial spoke head 10 homolog B (rsph10b) from Danio rerio (Zebrafish).